We begin with the raw amino-acid sequence, 181 residues long: UPF0302 protein lmo1921 (181 aa).

It belongs to the UPF0302 family.

This Listeria monocytogenes serovar 1/2a (strain ATCC BAA-679 / EGD-e) protein is UPF0302 protein lmo1921.